Here is a 527-residue protein sequence, read N- to C-terminus: Catalase (527 aa).

The segment covering 1–22 has biased composition (basic and acidic residues); sequence MSDSRDPASDQMKQWKEQRASQ. Residues 1-34 are disordered; the sequence is MSDSRDPASDQMKQWKEQRASQRPDVLTTGGGNP. At Ser-2 the chain carries N-acetylserine. Ser-9 carries the phosphoserine modification. Lys-13 bears the N6-succinyllysine mark. At Ser-21 the chain carries Phosphoserine. Active-site residues include His-75 and Asn-148. NADP(+) contacts are provided by His-194, Ser-201, Arg-203, and Asn-213. Lys-221 carries the post-translational modification N6-succinyllysine. Residue Lys-233 is modified to N6-acetyllysine. Residues Lys-237, Trp-303, His-305, and Lys-306 each contribute to the NADP(+) site. Lys-306 is modified (N6-acetyllysine; alternate). Lys-306 bears the N6-succinyllysine; alternate mark. Tyr-358 is a heme binding site. Phosphoserine occurs at positions 417 and 422. At Lys-430 the chain carries N6-acetyllysine; alternate. Lys-430 carries the post-translational modification N6-succinyllysine; alternate. At Ser-434 the chain carries Phosphoserine. 2 positions are modified to N6-acetyllysine; alternate: Lys-449 and Lys-480. Lys-449 and Lys-480 each carry N6-succinyllysine; alternate. Lys-499 is subject to N6-acetyllysine. Thr-511 is subject to Phosphothreonine. Ser-517 is subject to Phosphoserine. Lys-522 is subject to N6-succinyllysine. A Microbody targeting signal; atypical motif is present at residues 524-527; the sequence is KANL.

It belongs to the catalase family. In terms of assembly, homotetramer. Interacts (via microbody targeting signal) with PEX5, monomeric form interacts with PEX5, leading to its translocation into peroxisomes. Heme serves as cofactor. It depends on NADP(+) as a cofactor.

It localises to the peroxisome matrix. The catalysed reaction is 2 H2O2 = O2 + 2 H2O. Its function is as follows. Catalyzes the degradation of hydrogen peroxide (H(2)O(2)) generated by peroxisomal oxidases to water and oxygen, thereby protecting cells from the toxic effects of hydrogen peroxide. Promotes growth of cells including T-cells, B-cells, myeloid leukemia cells, melanoma cells, mastocytoma cells and normal and transformed fibroblast cells. The sequence is that of Catalase (Cat) from Mus musculus (Mouse).